Reading from the N-terminus, the 56-residue chain is UPF0391 membrane protein PSHAa0537 (56 aa).

A run of 2 helical transmembrane segments spans residues 6–26 and 27–47; these read ITFL…IAGA and AAGI…ISLV.

The protein belongs to the UPF0391 family.

It localises to the cell membrane. The sequence is that of UPF0391 membrane protein PSHAa0537 from Pseudoalteromonas translucida (strain TAC 125).